Consider the following 475-residue polypeptide: MSALTTLFKYVDENQDRYVKKLAEWVAIQSVSAWPEKRGEIRRMMEVAAADIKQLGGSVQLVDIGTQKLPDGSEIPLPPILLGKLGSDPQKKTVCIYGHLDVQPAALEDGWDSEPFTLVERDGKLFGRGATDDKGPVAGWINALEAFQKTKQEVPVNVRFCLEGMEESGSEGLDALIFAQKDAFFKDVDYVCISDNYWLGKNKPCITYGLRGICYFFIEVECSDKDLHSGVYGGSVHEAMTDLIMLMGCLMDKKGKILIPGISEAVAPVTEEELELYDKIDFDLEEYARDVGAGTLLHGCKKDILMHRWRYPSLSLHGIEGAFSGSGAKTVIPRKVVGKFSIRLVPNMTPEVVSEQVTSYLTKKFAELHSPNKFKVYMGHGGKPWVSDFNHPHYLAGRRALKTVFGVEPDLTREGGSIPVTLTFQEATGKNVMLLPVGSADDGAHSQNEKLNRRNYIEGTKMLAAYLYEVSQLKD.

The residue at position 9 (Lys9) is an N6-acetyllysine. Ser58 carries the phosphoserine modification. Mn(2+) is bound at residue His99. Residue Asp101 is part of the active site. Position 132 (Asp132) interacts with Mn(2+). Glu166 (proton acceptor) is an active-site residue. Substrate is bound by residues 166–167 (EE), Asp195, His228, Thr330, Arg343, Ser417, and His445. Residues Glu167 and Asp195 each contribute to the Mn(2+) site. Residue His445 coordinates Mn(2+).

The protein belongs to the peptidase M20A family. As to quaternary structure, homodimer. It depends on Mn(2+) as a cofactor.

It is found in the cytoplasm. The enzyme catalyses Hydrolysis of dipeptides, preferentially hydrophobic dipeptides including prolyl amino acids.. It catalyses the reaction L-threonyl-L-threonine + H2O = 2 L-threonine. It carries out the reaction L-threonyl-L-serine + H2O = L-threonine + L-serine. The catalysed reaction is L-seryl-L-threonine + H2O = L-threonine + L-serine. The enzyme catalyses L-cysteinylglycine + H2O = L-cysteine + glycine. It catalyses the reaction L-alanyl-L-cysteine + H2O = L-cysteine + L-alanine. It carries out the reaction (S)-lactate + L-phenylalanine = N-[(S)-lactoyl]-L-phenylalanine + H2O. Functionally, catalyzes the peptide bond hydrolysis in dipeptides, displaying a non-redundant activity toward threonyl dipeptides. Mediates threonyl dipeptide catabolism in a tissue-specific way. Has high dipeptidase activity toward cysteinylglycine, an intermediate metabolite in glutathione metabolism. Metabolizes N-lactoyl-amino acids, both through hydrolysis to form lactic acid and amino acids, as well as through their formation by reverse proteolysis. Plays a role in the regulation of cell cycle arrest and apoptosis. This is Cytosolic non-specific dipeptidase (CNDP2) from Bos taurus (Bovine).